A 312-amino-acid chain; its full sequence is Protein ABIL2 (312 aa).

The disordered stretch occupies residues T173 to K287. A compositionally biased stretch (low complexity) spans R183–S199. Residues S230–I251 are compositionally biased toward polar residues. Residues A269 to E279 are compositionally biased toward basic and acidic residues.

It belongs to the ABI family. As to quaternary structure, binds SCAR.

Its subcellular location is the cytoplasm. The protein resides in the cytoskeleton. Involved in regulation of actin and microtubule organization. Part of a WAVE complex that activates the Arp2/3 complex. This Arabidopsis thaliana (Mouse-ear cress) protein is Protein ABIL2 (ABIL2).